A 440-amino-acid chain; its full sequence is Histidinol dehydrogenase (440 aa).

Residues Tyr139, Gln201, and Asn224 each contribute to the NAD(+) site. Residues Ser247, Gln269, and His272 each coordinate substrate. Zn(2+)-binding residues include Gln269 and His272. Catalysis depends on proton acceptor residues Glu337 and His338. 4 residues coordinate substrate: His338, Asp371, Glu425, and His430. Asp371 serves as a coordination point for Zn(2+). His430 provides a ligand contact to Zn(2+).

It belongs to the histidinol dehydrogenase family. Zn(2+) is required as a cofactor.

The catalysed reaction is L-histidinol + 2 NAD(+) + H2O = L-histidine + 2 NADH + 3 H(+). The protein operates within amino-acid biosynthesis; L-histidine biosynthesis; L-histidine from 5-phospho-alpha-D-ribose 1-diphosphate: step 9/9. Catalyzes the sequential NAD-dependent oxidations of L-histidinol to L-histidinaldehyde and then to L-histidine. In Prochlorococcus marinus (strain MIT 9312), this protein is Histidinol dehydrogenase.